Consider the following 363-residue polypeptide: NAD(P)H-quinone oxidoreductase subunit 1, chloroplastic (363 aa).

6 helical membrane-spanning segments follow: residues 26–46, 98–118, 127–147, 253–273, 300–320, and 336–356; these read IIWVLIPIFTPVLGITIGVLV, FSIGPSIAVISILLSYLVIPF, LSIGVFLWIAISSIAPVGLLM, FGLFYVASYLNLLVSSLFVTV, VFGTIIGIFITLAKTYLFLFI, and LLNLGWKFLLPISLGNLLLTT.

It belongs to the complex I subunit 1 family. As to quaternary structure, NDH is composed of at least 16 different subunits, 5 of which are encoded in the nucleus.

It localises to the plastid. It is found in the chloroplast thylakoid membrane. It carries out the reaction a plastoquinone + NADH + (n+1) H(+)(in) = a plastoquinol + NAD(+) + n H(+)(out). The catalysed reaction is a plastoquinone + NADPH + (n+1) H(+)(in) = a plastoquinol + NADP(+) + n H(+)(out). In terms of biological role, NDH shuttles electrons from NAD(P)H:plastoquinone, via FMN and iron-sulfur (Fe-S) centers, to quinones in the photosynthetic chain and possibly in a chloroplast respiratory chain. The immediate electron acceptor for the enzyme in this species is believed to be plastoquinone. Couples the redox reaction to proton translocation, and thus conserves the redox energy in a proton gradient. The sequence is that of NAD(P)H-quinone oxidoreductase subunit 1, chloroplastic from Helianthus annuus (Common sunflower).